The sequence spans 152 residues: MILVKKIIDKLRPVVIDILSQLGLELFDITLRRERRKLVLRVVIDDPENYVSIRQCEIVSSQIGNYLDEADLIDSSYILEVSSPGLDRPLREMKDYNRFVGRLAKIWLKDGKVLVGNIKETTENTVSIELKNGEIITFSFDQIKKGKLEIDF.

This sequence belongs to the RimP family.

Its subcellular location is the cytoplasm. Required for maturation of 30S ribosomal subunits. The protein is Ribosome maturation factor RimP of Pseudothermotoga lettingae (strain ATCC BAA-301 / DSM 14385 / NBRC 107922 / TMO) (Thermotoga lettingae).